A 437-amino-acid chain; its full sequence is Protein PhoH2 (437 aa).

A PINc domain is found at 7-134; sequence RTYVLDTSVL…LVSKDIPLRV (128 aa).

It in the N-terminal section; belongs to the PINc/VapC protein family. This sequence in the C-terminal section; belongs to the PhoH family. As to quaternary structure, interacts with antitoxin PhoAT. The cofactor is Mg(2+).

The enzyme catalyses n ATP + n H2O + wound RNA = n ADP + n phosphate + unwound RNA.. The catalysed reaction is ATP + H2O = ADP + phosphate + H(+). It catalyses the reaction GTP + H2O = GDP + phosphate + H(+). Functionally, toxic component of a type II toxin-antitoxin (TA) system. The possible cognate antitoxin is PhoAT; the toxin gene can be expressed in the absence of the antitoxin gene in an endogenous mc(2)155 double deletion. Unwinds and/or cleaves 5'-tailed RNA in vitro that starts with 5'-AC, the reaction requires hydrolyzable ATP; double-stranded (ds)RNA and dsDNA are not unwound or cleaved. Has ATPase and GTPase activities. The polypeptide is Protein PhoH2 (Mycolicibacterium smegmatis (strain ATCC 700084 / mc(2)155) (Mycobacterium smegmatis)).